Here is a 316-residue protein sequence, read N- to C-terminus: MTIESRQKGVAKTARNPVKIAPQSTDQLLRKPSWIRVRSSNSQEFYEVKRILREQKLHTVCEEASCPNIGECFGKGTATFMILGDLCTRRCPFCDVAHGRPRPPDPEEPLHLAQSIAAMKLKYVVITSVDRDDLRDGGAQHFVDCIREVRAHSPQTKIEILVPDFRGRLDIALEKLFACPPDVMNHNLETVPRLYRQCRPGADYTHSLRLLKEFKARFPGIPTKSGLMLGLGETDEEILDVMRDLRKHDVEMLTIGQYLQPSIGHLPVMRYVTPGAFKEFERAAIEMGFSNAACGPMVRSSYHADQQAHEAGIIQR.

The [4Fe-4S] cluster site is built by Cys-61, Cys-66, Cys-72, Cys-87, Cys-91, Cys-94, and Ser-301. Residues 73 to 290 (FGKGTATFMI…ERAAIEMGFS (218 aa)) form the Radical SAM core domain.

Belongs to the radical SAM superfamily. Lipoyl synthase family. [4Fe-4S] cluster serves as cofactor.

It is found in the cytoplasm. It carries out the reaction [[Fe-S] cluster scaffold protein carrying a second [4Fe-4S](2+) cluster] + N(6)-octanoyl-L-lysyl-[protein] + 2 oxidized [2Fe-2S]-[ferredoxin] + 2 S-adenosyl-L-methionine + 4 H(+) = [[Fe-S] cluster scaffold protein] + N(6)-[(R)-dihydrolipoyl]-L-lysyl-[protein] + 4 Fe(3+) + 2 hydrogen sulfide + 2 5'-deoxyadenosine + 2 L-methionine + 2 reduced [2Fe-2S]-[ferredoxin]. The protein operates within protein modification; protein lipoylation via endogenous pathway; protein N(6)-(lipoyl)lysine from octanoyl-[acyl-carrier-protein]: step 2/2. Functionally, catalyzes the radical-mediated insertion of two sulfur atoms into the C-6 and C-8 positions of the octanoyl moiety bound to the lipoyl domains of lipoate-dependent enzymes, thereby converting the octanoylated domains into lipoylated derivatives. The polypeptide is Lipoyl synthase (Nitrosospira multiformis (strain ATCC 25196 / NCIMB 11849 / C 71)).